A 696-amino-acid chain; its full sequence is DNA-directed RNA polymerase subunit beta' (696 aa).

Residues C69, C71, C87, and C90 each contribute to the Zn(2+) site. Mg(2+) is bound by residues D504, D506, and D508.

This sequence belongs to the RNA polymerase beta' chain family. RpoC1 subfamily. As to quaternary structure, in plastids the minimal PEP RNA polymerase catalytic core is composed of four subunits: alpha, beta, beta', and beta''. When a (nuclear-encoded) sigma factor is associated with the core the holoenzyme is formed, which can initiate transcription. Mg(2+) serves as cofactor. It depends on Zn(2+) as a cofactor.

Its subcellular location is the plastid. The protein localises to the chloroplast. It carries out the reaction RNA(n) + a ribonucleoside 5'-triphosphate = RNA(n+1) + diphosphate. Its function is as follows. DNA-dependent RNA polymerase catalyzes the transcription of DNA into RNA using the four ribonucleoside triphosphates as substrates. The chain is DNA-directed RNA polymerase subunit beta' from Pinus thunbergii (Japanese black pine).